Reading from the N-terminus, the 335-residue chain is NADH-quinone oxidoreductase subunit H (335 aa).

8 consecutive transmembrane segments (helical) span residues 15–35 (VVKA…LSFV), 81–101 (MIFT…FSII), 114–134 (IGLL…LFAG), 154–174 (VSYE…VGSF), 187–207 (LWFI…GVAV), 238–258 (FFVG…TLFF), 270–290 (QVPF…FILL), and 307–327 (WKFC…IVLY).

The protein belongs to the complex I subunit 1 family. NDH-1 is composed of 13 different subunits. Subunits NuoA, H, J, K, L, M, N constitute the membrane sector of the complex.

It is found in the cell inner membrane. It carries out the reaction a quinone + NADH + 5 H(+)(in) = a quinol + NAD(+) + 4 H(+)(out). Functionally, NDH-1 shuttles electrons from NADH, via FMN and iron-sulfur (Fe-S) centers, to quinones in the respiratory chain. The immediate electron acceptor for the enzyme in this species is believed to be ubiquinone. Couples the redox reaction to proton translocation (for every two electrons transferred, four hydrogen ions are translocated across the cytoplasmic membrane), and thus conserves the redox energy in a proton gradient. This subunit may bind ubiquinone. This is NADH-quinone oxidoreductase subunit H from Pseudomonas putida (strain GB-1).